The sequence spans 407 residues: Tryptophan synthase beta chain (407 aa).

N6-(pyridoxal phosphate)lysine is present on Lys98.

This sequence belongs to the TrpB family. In terms of assembly, tetramer of two alpha and two beta chains. The cofactor is pyridoxal 5'-phosphate.

The enzyme catalyses (1S,2R)-1-C-(indol-3-yl)glycerol 3-phosphate + L-serine = D-glyceraldehyde 3-phosphate + L-tryptophan + H2O. It participates in amino-acid biosynthesis; L-tryptophan biosynthesis; L-tryptophan from chorismate: step 5/5. In terms of biological role, the beta subunit is responsible for the synthesis of L-tryptophan from indole and L-serine. This chain is Tryptophan synthase beta chain, found in Bradyrhizobium sp. (strain ORS 278).